The following is an 86-amino-acid chain: Large ribosomal subunit protein bL31B (86 aa).

This sequence belongs to the bacterial ribosomal protein bL31 family. Type B subfamily. Part of the 50S ribosomal subunit.

In Salmonella paratyphi A (strain ATCC 9150 / SARB42), this protein is Large ribosomal subunit protein bL31B.